A 1851-amino-acid chain; its full sequence is Chitin synthase (1851 aa).

The tract at residues Met-1–Tyr-21 is disordered. Topologically, residues Met-1 to Gln-108 are cytoplasmic. A helical transmembrane segment spans residues Val-109–Ala-129. At Lys-130–Asn-168 the chain is on the extracellular side. N-linked (GlcNAc...) asparagine glycosylation occurs at Asn-146. The helical transmembrane segment at Ala-169 to Ala-189 threads the bilayer. Topologically, residues Arg-190–Phe-208 are cytoplasmic. The chain crosses the membrane as a helical span at residues Leu-209–Ile-229. The Extracellular portion of the chain corresponds to Met-230 to Met-234. The helical transmembrane segment at Val-235–Leu-255 threads the bilayer. Residues Ser-256 to Arg-261 lie on the Cytoplasmic side of the membrane. A helical membrane pass occupies residues Trp-262–Ile-282. Topologically, residues Trp-283 to Arg-291 are extracellular. The chain crosses the membrane as a helical span at residues Phe-292–His-312. Topologically, residues Pro-313–Thr-337 are cytoplasmic. The chain crosses the membrane as a helical span at residues Phe-338–Pro-358. Residues Pro-359–Asp-544 are Extracellular-facing. Residues Asn-385 and Asn-435 are each glycosylated (N-linked (GlcNAc...) asparagine). Residues Leu-432–Glu-522 are disordered. The segment covering Lys-442–Lys-454 has biased composition (basic and acidic residues). A compositionally biased stretch (basic residues) spans Lys-455–Gly-465. Positions Gly-466–Lys-478 are enriched in low complexity. N-linked (GlcNAc...) asparagine glycosylation is found at Asn-469 and Asn-474. Positions Asp-513–Glu-522 are enriched in acidic residues. The helical transmembrane segment at Ala-545–Phe-565 threads the bilayer. The Cytoplasmic portion of the chain corresponds to Ala-566–Arg-573. Residues Val-574–Ser-594 form a helical membrane-spanning segment. Over Cys-595–Gln-631 the chain is Extracellular. Residues Pro-632 to Leu-652 traverse the membrane as a helical segment. The Cytoplasmic segment spans residues Pro-653–Leu-1124. A disordered region spans residues Ser-693–Thr-718. Residues Ile-696–Asp-711 are compositionally biased toward acidic residues. A helical membrane pass occupies residues Val-1125–Ile-1145. Residues Ser-1146–Arg-1154 are Extracellular-facing. A helical membrane pass occupies residues Leu-1155 to Gly-1175. Residues Thr-1176 to Gln-1179 are Cytoplasmic-facing. The chain crosses the membrane as a helical span at residues Leu-1180 to Gly-1200. At Thr-1201–Gly-1209 the chain is on the extracellular side. A helical membrane pass occupies residues Leu-1210 to Leu-1230. Over Leu-1231 to Glu-1235 the chain is Cytoplasmic. The helical transmembrane segment at Phe-1236 to Leu-1256 threads the bilayer. Over Pro-1257 to Thr-1461 the chain is Extracellular. Residue Asn-1274 is glycosylated (N-linked (GlcNAc...) asparagine). Positions Cys-1329 to Glu-1383 form a coiled coil. The segment at Leu-1350 to Glu-1402 is disordered. A compositionally biased stretch (acidic residues) spans Ala-1364–Glu-1373. Positions Thr-1374–Glu-1402 are enriched in basic and acidic residues. The chain crosses the membrane as a helical span at residues Cys-1462–Leu-1482. The Cytoplasmic portion of the chain corresponds to Gln-1483–Met-1527. The chain crosses the membrane as a helical span at residues Gly-1528 to Phe-1548. At His-1549–Lys-1851 the chain is on the extracellular side. The segment at Gly-1626–Val-1658 is disordered. Basic and acidic residues predominate over residues Arg-1637–Glu-1648. Asn-1660 carries an N-linked (GlcNAc...) asparagine glycan. The disordered stretch occupies residues His-1765–Lys-1851. Residues Gly-1781–Gly-1822 are compositionally biased toward basic and acidic residues. A compositionally biased stretch (basic residues) spans Lys-1823–Lys-1834.

Belongs to the chitin synthase family. Class IV subfamily. May require proteolytic cleavage for activation.

It is found in the cell membrane. It catalyses the reaction [(1-&gt;4)-N-acetyl-beta-D-glucosaminyl](n) + UDP-N-acetyl-alpha-D-glucosamine = [(1-&gt;4)-N-acetyl-beta-D-glucosaminyl](n+1) + UDP + H(+). In terms of biological role, required for the synthesis of chitin. This chain is Chitin synthase, found in Meloidogyne artiellia (British root-knot nematode).